A 423-amino-acid chain; its full sequence is TPR repeat-containing protein YpiA (423 aa).

TPR repeat units lie at residues 33–66, 67–100, 135–168, 171–204, 238–271, 272–305, 306–339, 340–373, and 374–407; these read DEDK…YPNE, TELT…DPSY, PVID…QSEI, VNVH…NPDP, TSLY…DEYN, KELF…DPGF, VEAL…GEED, PKYN…YRED, and RDFL…DGAN.

As to quaternary structure, interacts with the RNA polymerase core.

The polypeptide is TPR repeat-containing protein YpiA (ypiA) (Bacillus subtilis (strain 168)).